A 359-amino-acid chain; its full sequence is Ni-sirohydrochlorin a,c-diamide reductive cyclase complex, component CfbD (359 aa).

This sequence belongs to the NifD/NifK/NifE/NifN family. As to quaternary structure, homodimer or monomer. The Ni-sirohydrochlorin a,c-diamide reductive cyclase complex is composed of a NifH homolog component CfbC and a NifD homolog component CfbD. [4Fe-4S] cluster is required as a cofactor.

The catalysed reaction is Ni-sirohydrochlorin a,c-diamide + 3 AH2 + ATP + H2O = 15,17(3)-seco-F430-17(3)-acid + 3 A + ADP + phosphate. In terms of biological role, involved in the biosynthesis of the unique nickel-containing tetrapyrrole coenzyme F430, the prosthetic group of methyl-coenzyme M reductase (MCR), which plays a key role in methanogenesis and anaerobic methane oxidation. Catalyzes both the six-electron reduction of the tetrahydroporphyrin ring system and the gamma-lactamization of the c-acetamide side chain of Ni-sirohydrochlorin a,c-diamide to yield 15,17(3)-seco-F430-17(3)-acid (seco-F430), the last intermediate in the biosynthesis of the coenzyme F430. This Methanothermobacter thermautotrophicus (strain ATCC 29096 / DSM 1053 / JCM 10044 / NBRC 100330 / Delta H) (Methanobacterium thermoautotrophicum) protein is Ni-sirohydrochlorin a,c-diamide reductive cyclase complex, component CfbD.